Here is a 60-residue protein sequence, read N- to C-terminus: Metallothionein A (60 aa).

The beta stretch occupies residues 1–28 (MDPCDCSKSGTCNCGGSCTCTNCSCKSC). A divalent metal cation is bound by residues C4, C6, C12, C14, C18, C20, C23, C25, C28, C32, C33, C35, C36, C40, C43, C47, C49, C54, C58, and C59. An alpha region spans residues 29–60 (KKSCCPCCPSGCTKCASGCVCKGKTCDTSCCQ).

It belongs to the metallothionein superfamily. Type 1 family.

Its function is as follows. Metallothioneins have a high content of cysteine residues that bind various heavy metals. The polypeptide is Metallothionein A (mta) (Chionodraco hamatus (Antarctic teleost icefish)).